A 302-amino-acid chain; its full sequence is RNA polymerase II holoenzyme cyclin-like subunit (302 aa).

A Cyclin N-terminal domain is found at 53–142 (QQLIKLGKRM…VGECEFSLIS (90 aa)).

Belongs to the cyclin family. Cyclin C subfamily. In terms of assembly, component of the srb8-11 complex, a regulatory module of the Mediator complex.

Its subcellular location is the nucleus. Functionally, component of the srb8-11 complex. The srb8-11 complex is a regulatory module of the Mediator complex which is itself involved in regulation of basal and activated RNA polymerase II-dependent transcription. The srb8-11 complex may be involved in the transcriptional repression of a subset of genes regulated by Mediator. It may inhibit the association of the Mediator complex with RNA polymerase II to form the holoenzyme complex. The srb8-11 complex phosphorylates the C-terminal domain (CTD) of the largest subunit of RNA polymerase II. In Emericella nidulans (strain FGSC A4 / ATCC 38163 / CBS 112.46 / NRRL 194 / M139) (Aspergillus nidulans), this protein is RNA polymerase II holoenzyme cyclin-like subunit (ssn8).